The chain runs to 343 residues: Tetraacyldisaccharide 4'-kinase (343 aa).

58–65 is a binding site for ATP; it reads VAGGAGKT.

The protein belongs to the LpxK family.

The catalysed reaction is a lipid A disaccharide + ATP = a lipid IVA + ADP + H(+). It functions in the pathway glycolipid biosynthesis; lipid IV(A) biosynthesis; lipid IV(A) from (3R)-3-hydroxytetradecanoyl-[acyl-carrier-protein] and UDP-N-acetyl-alpha-D-glucosamine: step 6/6. Transfers the gamma-phosphate of ATP to the 4'-position of a tetraacyldisaccharide 1-phosphate intermediate (termed DS-1-P) to form tetraacyldisaccharide 1,4'-bis-phosphate (lipid IVA). The protein is Tetraacyldisaccharide 4'-kinase of Polaromonas naphthalenivorans (strain CJ2).